Here is a 145-residue protein sequence, read N- to C-terminus: Synaptojanin-2-binding protein (145 aa).

Residues 1 to 117 (MNGRVDYLVT…VHRGEGEPSG (117 aa)) lie on the Cytoplasmic side of the membrane. Residues 13–100 (EINLTRGPSG…AVSLRVQHRL (88 aa)) enclose the PDZ domain. The chain crosses the membrane as a helical; Anchor for type IV membrane protein span at residues 118–138 (VPVAMVLLPVFALTMVAVWAF). Over 139–145 (VRYRKQL) the chain is Mitochondrial intermembrane.

In terms of assembly, binds (via the PDZ domain) to isoform 2A of SYNJ2 (via the unique motif in the C-terminus). Interacts (via C-terminus) with RALBP1. Interacts (via PDZ domain) with ACVR2A (via C-terminus) and ACVR2B (via C-terminus). Forms a ternary complex with ACVR2A and RALBP1. Interacts with MAPK12. Interacts with DLL1; enhances DLL1 protein stability, and promotes notch signaling in endothelial cells. In terms of tissue distribution, isoform 1 and isoform 2 are widely expressed, notably in brain, heart, lung, liver, kidney, skeletal muscle, ovary and testis. Isoform 3 is detected only in heart, spleen and testis.

Its subcellular location is the mitochondrion outer membrane. It is found in the cytoplasm. It localises to the perinuclear region. Its function is as follows. Isoform 1 regulates endocytosis of activin type 2 receptor kinases through the Ral/RALBP1-dependent pathway and may be involved in suppression of activin-induced signal transduction. Isoform 2 and isoform 3 show a stimulatory affect on activin-induced signal transduction and enhance activin type 2 expression at the cell surface. The protein is Synaptojanin-2-binding protein of Mus musculus (Mouse).